The following is a 352-amino-acid chain: Protein RecA (352 aa).

67–74 (GPESSGKT) lines the ATP pocket.

This sequence belongs to the RecA family.

The protein resides in the cytoplasm. Functionally, can catalyze the hydrolysis of ATP in the presence of single-stranded DNA, the ATP-dependent uptake of single-stranded DNA by duplex DNA, and the ATP-dependent hybridization of homologous single-stranded DNAs. It interacts with LexA causing its activation and leading to its autocatalytic cleavage. This Chlamydia trachomatis serovar L2 (strain ATCC VR-902B / DSM 19102 / 434/Bu) protein is Protein RecA.